We begin with the raw amino-acid sequence, 185 residues long: Ribosome-recycling factor (185 aa).

This sequence belongs to the RRF family.

Its subcellular location is the cytoplasm. Responsible for the release of ribosomes from messenger RNA at the termination of protein biosynthesis. May increase the efficiency of translation by recycling ribosomes from one round of translation to another. The sequence is that of Ribosome-recycling factor from Haemophilus influenzae (strain ATCC 51907 / DSM 11121 / KW20 / Rd).